The chain runs to 374 residues: PqqA peptide cyclase (374 aa).

The Radical SAM core domain occupies 13 to 230; the sequence is VPAPIAMLAE…EAEARLRGTL (218 aa). [4Fe-4S] cluster contacts are provided by C27, C31, and C34.

This sequence belongs to the radical SAM superfamily. PqqE family. As to quaternary structure, interacts with PqqD. The interaction is necessary for activity of PqqE. The cofactor is [4Fe-4S] cluster.

The catalysed reaction is [PQQ precursor protein] + S-adenosyl-L-methionine = E-Y cross-linked-[PQQ precursor protein] + 5'-deoxyadenosine + L-methionine + H(+). The protein operates within cofactor biosynthesis; pyrroloquinoline quinone biosynthesis. In terms of biological role, catalyzes the cross-linking of a glutamate residue and a tyrosine residue in the PqqA protein as part of the biosynthesis of pyrroloquinoline quinone (PQQ). The chain is PqqA peptide cyclase from Ruegeria pomeroyi (strain ATCC 700808 / DSM 15171 / DSS-3) (Silicibacter pomeroyi).